The primary structure comprises 1806 residues: COPII coat assembly protein sec16 (1806 aa).

Disordered stretches follow at residues 1-202 (MAAS…HDFF), 263-305 (NEVQ…DASP), 318-846 (ASGN…PAHN), 1418-1647 (HPMD…IRAK), and 1663-1806 (WVNK…VMAK). Composition is skewed to polar residues over residues 23-45 (TIEN…QAKT), 73-91 (GDTQ…QPQP), 128-154 (SLES…SQPQ), 165-194 (TLHQ…SPTS), and 283-304 (KSTS…SDAS). Composition is skewed to acidic residues over residues 340–352 (LSDE…PEDD) and 360–374 (ELDD…DETS). Residues 412 to 426 (QPTSYTPHQPSTSDL) are compositionally biased toward polar residues. Basic and acidic residues predominate over residues 461 to 470 (SFAERSKEGY). Low complexity predominate over residues 489–501 (THRPVVVPGNNMA). 2 stretches are compositionally biased toward pro residues: residues 502–524 (PGPP…PPMA) and 571–587 (VLPP…PPPT). Low complexity predominate over residues 610–627 (APSAPSAPSAPSAASRYS). Residues 638 to 658 (KPPPSPRYSPAPPPSTAPVPP) are compositionally biased toward pro residues. 2 stretches are compositionally biased toward polar residues: residues 662-671 (YASQPSSGPG) and 737-753 (VDTQ…QTSP). Composition is skewed to low complexity over residues 793–805 (PPRR…PSQQ) and 830–844 (SPTK…SAPA). 4 stretches are compositionally biased toward polar residues: residues 1456 to 1465 (YQSTPPQTSY), 1503 to 1521 (PSSQ…TGAS), 1528 to 1540 (TSGS…TFNT), and 1547 to 1559 (IETT…QSTD). Over residues 1591–1613 (KAEKERKDREAEENFRRIAEAEA) the composition is skewed to basic and acidic residues. Low complexity predominate over residues 1686–1696 (APPSRTASGSS). The segment covering 1697–1710 (APPPAASPKPPGPD) has biased composition (pro residues). The segment covering 1747-1761 (STGAAAPPTRPGSSS) has biased composition (low complexity).

The protein belongs to the SEC16 family.

It localises to the endoplasmic reticulum membrane. Its function is as follows. Involved in the initiation of assembly of the COPII coat required for the formation of transport vesicles from the endoplasmic reticulum (ER) and the selection of cargo molecules. Also involved in autophagy. The sequence is that of COPII coat assembly protein sec16 (sec16) from Aspergillus terreus (strain NIH 2624 / FGSC A1156).